Here is a 331-residue protein sequence, read N- to C-terminus: 6-phosphogluconolactonase (331 aa).

N6-acetyllysine is present on K287.

The protein belongs to the cycloisomerase 2 family.

The catalysed reaction is 6-phospho-D-glucono-1,5-lactone + H2O = 6-phospho-D-gluconate + H(+). It functions in the pathway carbohydrate degradation; pentose phosphate pathway; D-ribulose 5-phosphate from D-glucose 6-phosphate (oxidative stage): step 2/3. Functionally, catalyzes the hydrolysis of 6-phosphogluconolactone to 6-phosphogluconate. The protein is 6-phosphogluconolactonase of Escherichia coli O139:H28 (strain E24377A / ETEC).